The following is an 822-amino-acid chain: BDNF/NT-3 growth factors receptor (822 aa).

Residues 1 to 31 form the signal peptide; that stretch reads MSSWIRWHGPAMARLWGFCWLVVGFWRAAFA. Disulfide bonds link C32-C38 and C36-C45. The LRRNT domain maps to 32-61; the sequence is CPTSCKCSASRIWCSDPSPGIVAFPRLEPN. The Extracellular portion of the chain corresponds to 32–430; the sequence is CPTSCKCSAS…DVTDKTGREH (399 aa). N67, N95, and N121 each carry an N-linked (GlcNAc...) asparagine glycan. LRR repeat units lie at residues 92 to 113 and 116 to 137; these read GLRNLTIVDSGLKFVAHKAFLK and NLQHINFTRNKLTSLSRKHFRH. Residues 148–196 form the LRRCT domain; the sequence is NPFTCSCDIMWIKTLQEAKSSPDTQDLYCLNESSKNIPLANLQIPNCGL. 2 disulfides stabilise this stretch: C152–C176 and C154–C194. Residues N178, N205, N241, N254, N280, N325, N338, and N412 are each glycosylated (N-linked (GlcNAc...) asparagine). Ig-like C2-type domains follow at residues 197-282 and 295-365; these read PSAN…VNLT and PTSD…IAKN. C218 and C266 form a disulfide bridge. Residues C302 and C345 are joined by a disulfide bond. Residues 431-454 traverse the membrane as a helical segment; the sequence is LSVYAVVVIASVVGFCLLVMLFLL. Residues 455–466 are interaction with MAPK8IP3/JIP3; that stretch reads KLARHSKFGMKG. Topologically, residues 455–822 are cytoplasmic; sequence KLARHSKFGM…ASPVYLDILG (368 aa). Positions 475–498 are disordered; that stretch reads DDSASPLHHISNGSNTPSSSEGGP. Polar residues predominate over residues 485 to 495; the sequence is SNGSNTPSSSE. The residue at position 516 (Y516) is a Phosphotyrosine; by autocatalysis. The 270-residue stretch at 538 to 807 folds into the Protein kinase domain; the sequence is IVLKRELGEG…KNIKGIHTLL (270 aa). ATP is bound by residues 544-552 and K572; that span reads LGEGAFGKV. D676 (proton acceptor) is an active-site residue. Y702, Y706, Y707, and Y817 each carry phosphotyrosine; by autocatalysis.

Belongs to the protein kinase superfamily. Tyr protein kinase family. Insulin receptor subfamily. As to quaternary structure, exists in a dynamic equilibrium between monomeric (low affinity) and dimeric (high affinity) structures. Interacts (phosphorylated upon activation by BDNF) with SHC1; mediates SHC1 phosphorylation and activation. Interacts (phosphorylated upon activation by BDNF) with PLCG1 and/or PLCG2; mediates PLCG1 phosphorylation and activation. Interacts with SH2B1 and SH2B2. Interacts with NGFR; may regulate the ligand specificity of the receptor. Interacts with SORCS2; this interaction is important for normal targeting to post-synaptic densities in response to high-frequency stimulation. Interacts (phosphorylated upon ligand-binding) with SH2D1A; regulates NTRK2. Interacts with SQSTM1 and KIDINS220. Interacts (phosphorylated upon ligand-binding) with FRS2; activates the MAPK signaling pathway. Interacts with APPL1. Interacts with MAPK8IP3/JIP3 and KLC1; interaction with KLC1 is mediated by MAPK8IP3/JIP3. Interacts with SORL1; this interaction facilitates NTRK2 trafficking between synaptic plasma membranes, postsynaptic densities and cell soma, hence positively regulates BDNF signaling. Interacts with SLITRK2. Phosphorylated. Undergoes ligand-mediated autophosphorylation that is required for interaction with SHC1 and PLCG1 and other downstream effectors. Isoform TrkB-T-Shc is not phosphorylated. In terms of processing, ubiquitinated. Undergoes polyubiquitination upon activation; regulated by NGFR. Ubiquitination regulates the internalization of the receptor. As to expression, isoform TrkB is expressed in the central and peripheral nervous system. In the central nervous system (CNS), expression is observed in the cerebral cortex, hippocampus, thalamus, choroid plexus, granular layer of the cerebellum, brain stem, and spinal cord. In the peripheral nervous system, it is expressed in many cranial ganglia, the ophthalmic nerve, the vestibular system, multiple facial structures, the submaxillary glands, and dorsal root ganglia. Isoform TrkB-T1 is mainly expressed in the brain but also detected in other tissues including pancreas, kidney and heart. Isoform TrkB-T-Shc is predominantly expressed in the brain.

The protein localises to the cell membrane. It localises to the endosome membrane. It is found in the early endosome membrane. Its subcellular location is the cell projection. The protein resides in the axon. The protein localises to the dendrite. It localises to the cytoplasm. It is found in the perinuclear region. Its subcellular location is the postsynaptic density. The enzyme catalyses L-tyrosyl-[protein] + ATP = O-phospho-L-tyrosyl-[protein] + ADP + H(+). With respect to regulation, the neuronal activity and the influx of calcium positively regulate the kinase activity and the internalization of the receptor which are both important for active signaling. Regulated by NGFR that may control the internalization of the receptor. NGFR may also stimulate the activation by BDNF compared to NTF3 and NTF4. SH2D1A inhibits the autophosphorylation of the receptor, and alters the recruitment and activation of downstream effectors and signaling cascades. The formation of active receptors dimers able to fully transduce the ligand-mediated signal, may be negatively regulated by the formation of inactive heterodimers with the non-catalytic isoforms. Functionally, receptor tyrosine kinase involved in the development and the maturation of the central and the peripheral nervous systems through regulation of neuron survival, proliferation, migration, differentiation, and synapse formation and plasticity. Receptor for BDNF/brain-derived neurotrophic factor and NTF4/neurotrophin-4. Alternatively can also bind NTF3/neurotrophin-3 which is less efficient in activating the receptor but regulates neuron survival through NTRK2. Upon ligand-binding, undergoes homodimerization, autophosphorylation and activation. Recruits, phosphorylates and/or activates several downstream effectors including SHC1, FRS2, SH2B1, SH2B2 and PLCG1 that regulate distinct overlapping signaling cascades. Through SHC1, FRS2, SH2B1, SH2B2 activates the GRB2-Ras-MAPK cascade that regulates for instance neuronal differentiation including neurite outgrowth. Through the same effectors controls the Ras-PI3 kinase-AKT1 signaling cascade that mainly regulates growth and survival. Through PLCG1 and the downstream protein kinase C-regulated pathways controls synaptic plasticity. Thereby, plays a role in learning and memory by regulating both short term synaptic function and long-term potentiation. PLCG1 also leads to NF-Kappa-B activation and the transcription of genes involved in cell survival. Hence, it is able to suppress anoikis, the apoptosis resulting from loss of cell-matrix interactions. May also play a role in neutrophin-dependent calcium signaling in glial cells and mediate communication between neurons and glia. The sequence is that of BDNF/NT-3 growth factors receptor (NTRK2) from Homo sapiens (Human).